A 38-amino-acid chain; its full sequence is Photosystem II reaction center protein L (38 aa).

Residues 17–37 (SLYWGLLLIFVLAVLFSNYFF) form a helical membrane-spanning segment.

This sequence belongs to the PsbL family. PSII is composed of 1 copy each of membrane proteins PsbA, PsbB, PsbC, PsbD, PsbE, PsbF, PsbH, PsbI, PsbJ, PsbK, PsbL, PsbM, PsbT, PsbX, PsbY, PsbZ, Psb30/Ycf12, at least 3 peripheral proteins of the oxygen-evolving complex and a large number of cofactors. It forms dimeric complexes.

The protein resides in the plastid. It is found in the chloroplast thylakoid membrane. One of the components of the core complex of photosystem II (PSII). PSII is a light-driven water:plastoquinone oxidoreductase that uses light energy to abstract electrons from H(2)O, generating O(2) and a proton gradient subsequently used for ATP formation. It consists of a core antenna complex that captures photons, and an electron transfer chain that converts photonic excitation into a charge separation. This subunit is found at the monomer-monomer interface and is required for correct PSII assembly and/or dimerization. This Angiopteris evecta (Mule's foot fern) protein is Photosystem II reaction center protein L.